A 514-amino-acid polypeptide reads, in one-letter code: Maturase K (514 aa).

It belongs to the intron maturase 2 family. MatK subfamily.

It is found in the plastid. It localises to the chloroplast. Its function is as follows. Usually encoded in the trnK tRNA gene intron. Probably assists in splicing its own and other chloroplast group II introns. In Plantago argentea (Silver plantain), this protein is Maturase K.